A 197-amino-acid polypeptide reads, in one-letter code: Recombination protein RecR (197 aa).

The segment at 56-71 adopts a C4-type zinc-finger fold; sequence CQRCHSFSDEAVCPLC. In terms of domain architecture, Toprim spans 79–174; the sequence is TLLCVVETAA…KVTRLAQGVP (96 aa).

This sequence belongs to the RecR family.

May play a role in DNA repair. It seems to be involved in an RecBC-independent recombinational process of DNA repair. It may act with RecF and RecO. In Psychrobacter cryohalolentis (strain ATCC BAA-1226 / DSM 17306 / VKM B-2378 / K5), this protein is Recombination protein RecR.